A 226-amino-acid polypeptide reads, in one-letter code: MAFRNRMYQLSNVDDADADILNSHFAPNPRGQNHTHGRRRNTLALCTTKDQMFVYGSTPAGGAEWCSEALERSRPRAAFKQQRRRHVPRWISDSFRTCLPKPSGILKEQTVNEEEGNSRHRGKYDCDERIGVAESMNYWHGIVRTEEDGSKTLFLIPESWEDVHLKEGLVAIIDLAVDRLHCSKLVLFVDKNNSSLPYLVKSLHWVGFEPLPHLNCSDHALFGMEL.

It belongs to the ODC antizyme family. As to quaternary structure, interacts with ODC and thereby sterically blocks ODC homodimerization.

In terms of biological role, ornithine decarboxylase (ODC) antizyme protein that negatively regulates ODC activity and intracellular polyamine biosynthesis in response to increased intracellular polyamine levels. Binds to ODC monomers, inhibiting the assembly of the functional ODC homodimer, and targets the monomers for ubiquitin-independent proteolytic destruction by the 26S proteasome. The sequence is that of Ornithine decarboxylase antizyme (spa1) from Schizosaccharomyces pombe (strain 972 / ATCC 24843) (Fission yeast).